Here is a 307-residue protein sequence, read N- to C-terminus: 4-hydroxybenzoate octaprenyltransferase (307 aa).

Helical transmembrane passes span 19–39 (PVGIELLLWPTLWGVLFAAMG), 48–68 (VTAGLPSLSIFVVFALGAILM), 105–125 (AIAAFLVLVLLSASLLLFLPI), 127–147 (VFYWSFAAVILAFIYPFMKRY), 150–170 (LPQVFLAAAFGWAIPMAYVAI), 172–192 (GAADIWCWLLFLAYMCWTVAY), 221–241 (VIIISLLQILFLVIMGAVMWH), 243–263 (FVPTSLGITPVFGLALVAMMF), and 282–302 (FLANIWVGRYVFALIAIACVW).

This sequence belongs to the UbiA prenyltransferase family. It depends on Mg(2+) as a cofactor.

The protein resides in the cell inner membrane. It carries out the reaction all-trans-octaprenyl diphosphate + 4-hydroxybenzoate = 4-hydroxy-3-(all-trans-octaprenyl)benzoate + diphosphate. Its pathway is cofactor biosynthesis; ubiquinone biosynthesis. In terms of biological role, catalyzes the prenylation of para-hydroxybenzoate (PHB) with an all-trans polyprenyl group. Mediates the second step in the final reaction sequence of ubiquinone-8 (UQ-8) biosynthesis, which is the condensation of the polyisoprenoid side chain with PHB, generating the first membrane-bound Q intermediate 3-octaprenyl-4-hydroxybenzoate. The polypeptide is 4-hydroxybenzoate octaprenyltransferase (Psychrobacter arcticus (strain DSM 17307 / VKM B-2377 / 273-4)).